The chain runs to 311 residues: MQPPGGDAPAGCPFSGARAAQPAQAAHEAPHVPGEADAQAGWHNAQLDFSKSMSYGDYLSLNSILDAQHPLSPDHNEMLFIIQHQTSELWMKLALFELRGALDAVRTDALPPAFKMLARVSRILEQLVQAWNVLSTMTPSEYSAMRPYLGQSSGFQSYQYRQLEFLLGNKNAQMLQPHAHRPDILEQVRATLEAPSFYDEVVRLLARRGFPIAAERLERDWTQPTRHDETVEAAWLEVYRHPQQHWELYEMAEELVDLEDAFRQWRFRHVTTVERIIGFKQGTGGTSGAPYLRKMLDVVLFPELWHVRTTL.

Residues 1 to 37 are disordered; the sequence is MQPPGGDAPAGCPFSGARAAQPAQAAHEAPHVPGEAD. Residues 17 to 27 are compositionally biased toward low complexity; sequence ARAAQPAQAAH. Substrate-binding positions include 80–84, tyrosine 142, and arginine 146; that span reads FIIQH. Residue histidine 269 coordinates heme. Threonine 283 is a binding site for substrate.

Belongs to the tryptophan 2,3-dioxygenase family. In terms of assembly, homotetramer. Heme serves as cofactor.

The enzyme catalyses L-tryptophan + O2 = N-formyl-L-kynurenine. The protein operates within amino-acid degradation; L-tryptophan degradation via kynurenine pathway; L-kynurenine from L-tryptophan: step 1/2. Its function is as follows. Heme-dependent dioxygenase that catalyzes the oxidative cleavage of the L-tryptophan (L-Trp) pyrrole ring and converts L-tryptophan to N-formyl-L-kynurenine. Catalyzes the oxidative cleavage of the indole moiety. The polypeptide is Tryptophan 2,3-dioxygenase (Burkholderia orbicola (strain MC0-3)).